A 131-amino-acid polypeptide reads, in one-letter code: Small ribosomal subunit protein bS6 (131 aa).

Residues 96-131 (VTEASPMVKAKDERRERRDDFANETADDAEAGDSEE) form a disordered region. Basic and acidic residues predominate over residues 104-116 (KAKDERRERRDDF). The segment covering 120 to 131 (TADDAEAGDSEE) has biased composition (acidic residues).

This sequence belongs to the bacterial ribosomal protein bS6 family.

Functionally, binds together with bS18 to 16S ribosomal RNA. In Salmonella arizonae (strain ATCC BAA-731 / CDC346-86 / RSK2980), this protein is Small ribosomal subunit protein bS6.